The primary structure comprises 229 residues: PKHD-type hydroxylase RPA3479 (229 aa).

A Fe2OG dioxygenase domain is found at 78–180 (QIFPPLFNRY…RVASFFWLQS (103 aa)). Residues His98, Asp100, and His161 each contribute to the Fe cation site. 2-oxoglutarate is bound at residue Arg171.

Fe(2+) serves as cofactor. The cofactor is L-ascorbate.

In Rhodopseudomonas palustris (strain ATCC BAA-98 / CGA009), this protein is PKHD-type hydroxylase RPA3479.